A 344-amino-acid polypeptide reads, in one-letter code: C-C chemokine receptor-like 2 (344 aa).

The Extracellular portion of the chain corresponds to 1-43 (MANYTLAPEDEYDVLIEGELESDEAEQCDRYDTWALSAQLVPS). A glycan (N-linked (GlcNAc...) asparagine) is linked at Asn3. A helical transmembrane segment spans residues 44-64 (LCSAVFVVGVLDNLLVVLILV). Residues 65-74 (KYKGLKRVEN) are Cytoplasmic-facing. A helical membrane pass occupies residues 75–95 (IYLLNLAVSNLCFLLTLPFWA). At 96–104 (HAGGDPMCK) the chain is on the extracellular side. Residues Cys103 and Cys181 are joined by a disulfide bond. Residues 105–125 (ILIGLYFVGLYSETFFNCLLT) traverse the membrane as a helical segment. Residues 126–148 (LQRYLVFLHKGNFFSVRRRVPCG) are Cytoplasmic-facing. The chain crosses the membrane as a helical span at residues 149 to 169 (IVTSAVAWVTAILATVPEFAV). The Extracellular portion of the chain corresponds to 170-198 (YKPQMEDPKYKCAFSRTPFLPADETFWKH). A helical transmembrane segment spans residues 199-219 (FLTLKMNVSVLVFPLFIFTFL). The Cytoplasmic portion of the chain corresponds to 220–238 (YVQMRKTLRFGEQRYSLFK). Residues 239–259 (LVFAIMVVFLLMWAPYNIALF) form a helical membrane-spanning segment. Topologically, residues 260 to 281 (LSTFKEHFSLSDCKSNYNLDKS) are extracellular. The helical transmembrane segment at 282 to 302 (VLITKLIATTHCCVNPLLYVF) threads the bilayer. Residues 303–344 (LDGTFRKYLCRFFHRRSNTPRQPRRRFAQGTSREEPDRSTEV) are Cytoplasmic-facing. Positions 323-344 (RQPRRRFAQGTSREEPDRSTEV) are disordered. Residues 334-344 (SREEPDRSTEV) are compositionally biased toward basic and acidic residues.

The protein belongs to the G-protein coupled receptor 1 family.

Its subcellular location is the cell membrane. Its function is as follows. Receptor for CCL19 and chemerin/RARRES2. Does not appear to be a signaling receptor, but may have a role in modulating chemokine-triggered immune responses by capturing and internalizing CCL19 or by presenting RARRES2 ligand to CMKLR1, a functional signaling receptor. Plays a critical role for the development of Th2 responses. In Macaca mulatta (Rhesus macaque), this protein is C-C chemokine receptor-like 2 (CCRL2).